A 148-amino-acid chain; its full sequence is DnaJ homolog subfamily C member 24 (148 aa).

Residues 10–81 (DWYSILGADP…ETKKKYDLQR (72 aa)) form the J domain. The DPH-type MB domain occupies 92–147 (VDAQVRLEEMSWNQGDESFFLSCRCGGKYTVSKDEAQEATLISCDACSLIVELLHQ). 4 residues coordinate Zn(2+): Cys114, Cys116, Cys135, and Cys138.

It belongs to the DPH4 family. Monomer and homooligomer. Iron binding promotes oligomerization. In terms of tissue distribution, detected in heart, brain, spleen, lung, liver, kidney and testis.

It localises to the cytoplasm. The protein localises to the cytoskeleton. It functions in the pathway protein modification; peptidyl-diphthamide biosynthesis. Functionally, the iron-bound form is redox-active and can function as electron carrier. Stimulates the ATPase activity of several Hsp70-type chaperones. This ability is enhanced by iron-binding. Plays a role in the diphthamide biosynthesis, a post-translational modification of histidine which occurs in translation elongation factor 2 (EEF2). The polypeptide is DnaJ homolog subfamily C member 24 (Dnajc24) (Mus musculus (Mouse)).